The chain runs to 554 residues: Glucose-binding protein GlcS (554 aa).

Over 1 to 17 (MKRKYPYSLAKGLTSTQ) the chain is Cytoplasmic. The helical transmembrane segment at 18 to 38 (IAVIVAVIVIVIIIGVVAGFV) threads the bilayer. Topologically, residues 39–525 (LTKGPSTTAV…YGLTNNTQKT (487 aa)) are extracellular. Residues 526-546 (SNSVMLFLLPFLALPLAIASI) traverse the membrane as a helical segment. Residues 547–554 (DNKYYLLK) are Cytoplasmic-facing.

It belongs to the bacterial solute-binding protein 1 family. The complex is composed of two ATP-binding proteins (GlcV), two transmembrane proteins (GlcT and GlcU) and a solute-binding protein (GlcS).

It localises to the cell membrane. Binding of glucose is strongly inhibited by galactose and mannose. Its function is as follows. Part of the ABC transporter complex GlcSTUV involved in glucose uptake. Binds glucose. Can also bind galactose and mannose. This chain is Glucose-binding protein GlcS, found in Saccharolobus solfataricus (strain ATCC 35092 / DSM 1617 / JCM 11322 / P2) (Sulfolobus solfataricus).